We begin with the raw amino-acid sequence, 594 residues long: Zinc finger protein 703 (594 aa).

Over residues 1 to 14 (MSDSPAGSNPRTPE) the composition is skewed to polar residues. 3 disordered regions span residues 1-37 (MSDSPAGSNPRTPESSGSGGGSSSGGGGGKRPAVPAV), 100-298 (TCSQ…GHVA), and 345-370 (LVGGQLSGGLGLPPGKPPSSSPLTGA). N-acetylserine is present on Ser-2. Residues 17–30 (GSGGGSSSGGGGGK) show a composition bias toward gly residues. Low complexity-rich tracts occupy residues 134–145 (RSAPGAASAAAA), 177–191 (GSSSVSSTTSSSSSS), and 212–225 (GASVSTSSNSSSPG). Over residues 246–256 (ELDKKEQEAKP) the composition is skewed to basic and acidic residues. Residue Ser-257 is modified to Phosphoserine. Residues 345–356 (LVGGQLSGGLGL) show a composition bias toward gly residues. The C2H2-type zinc finger occupies 460 to 488 (HSCNWVAASGPCDKRFATSEELLSHLRTH). Omega-N-methylarginine is present on Arg-584.

This sequence belongs to the Elbow/Noc family. In terms of assembly, interacts with DCAF7 and PHB2. Interacts with TLE4; increases transcriptional repression. As to expression, expressed in mammary epithelium.

The protein resides in the nucleus. Its subcellular location is the cytoplasm. In terms of biological role, transcriptional corepressor which does not bind directly to DNA and may regulate transcription through recruitment of histone deacetylases to gene promoters. Regulates cell adhesion, migration and proliferation. May be required for segmental gene expression during hindbrain development. This is Zinc finger protein 703 (Znf703) from Mus musculus (Mouse).